The following is a 129-amino-acid chain: UPF0102 protein Mrad2831_2938 (129 aa).

It belongs to the UPF0102 family.

The polypeptide is UPF0102 protein Mrad2831_2938 (Methylobacterium radiotolerans (strain ATCC 27329 / DSM 1819 / JCM 2831 / NBRC 15690 / NCIMB 10815 / 0-1)).